The primary structure comprises 371 residues: Putative glutamate--cysteine ligase 2 (371 aa).

This sequence belongs to the glutamate--cysteine ligase type 2 family. YbdK subfamily.

It carries out the reaction L-cysteine + L-glutamate + ATP = gamma-L-glutamyl-L-cysteine + ADP + phosphate + H(+). Its function is as follows. ATP-dependent carboxylate-amine ligase which exhibits weak glutamate--cysteine ligase activity. The protein is Putative glutamate--cysteine ligase 2 of Paraburkholderia phytofirmans (strain DSM 17436 / LMG 22146 / PsJN) (Burkholderia phytofirmans).